The chain runs to 321 residues: Phospholipid phosphatase-related protein type 5 (321 aa).

6 consecutive transmembrane segments (helical) span residues 6–26 (VALI…TVML), 62–82 (AVPP…VIIV), 122–142 (FLGI…AGQV), 196–213 (AALS…ITST), 225–245 (VLCL…VAEY), and 252–272 (VIAG…CVVN).

This sequence belongs to the PA-phosphatase related phosphoesterase family.

It is found in the cell membrane. In terms of biological role, induces filopodia formation and promotes neurite growth in a CDC42-independent manner; impedes neurite growth inhibitory-mediated axonal retraction. The polypeptide is Phospholipid phosphatase-related protein type 5 (Mus musculus (Mouse)).